The sequence spans 45 residues: Large ribosomal subunit protein bL34 (45 aa).

Belongs to the bacterial ribosomal protein bL34 family.

The chain is Large ribosomal subunit protein bL34 from Salinispora arenicola (strain CNS-205).